The chain runs to 419 residues: Synaptotagmin-1 (419 aa).

At 1 to 58 (MVSESHHEALAAPPVTTVATVLPSNATEPASPGEGKEDAFSKLKEKFMNELHKIPLPP) the chain is on the vesicular side. A glycan (N-linked (GlcNAc...) asparagine) is linked at N25. The chain crosses the membrane as a helical span at residues 59 to 80 (WALIAIAIVAVLLVLTCCFCIC). Residues C75, C76, C78, C80, and C83 are each lipidated (S-palmitoyl cysteine). Over 81–419 (KKCLFKKKNK…EVDAMLAVKK (339 aa)) the chain is Cytoplasmic. Residues 108–139 (KDLGKTMKDQDDDAETGLTDGEEKEEPKEEEK) form a disordered region. Residues 117-131 (QDDDAETGLTDGEEK) show a composition bias toward acidic residues. T126 is modified (phosphothreonine). The tract at residues 133–379 (EPKEEEKLGK…AIGKVFVGYN (247 aa)) is phospholipid binding. The C2 1 domain maps to 139 to 258 (KLGKLQYSLD…DFGHVTEEWR (120 aa)). Positions 169, 170, and 176 each coordinate Ca(2+). At Y227 the chain carries Phosphotyrosine. Ca(2+) contacts are provided by D228, F229, D230, S233, K234, and D236. The residue at position 262 (S262) is a Phosphoserine. One can recognise a C2 2 domain in the interval 270–403 (KLGDICFSLR…NPRRPIAQWH (134 aa)). Positions 301 and 307 each coordinate Ca(2+). Residues S340 and S342 each carry the phosphoserine modification. D361, D363, and D369 together coordinate Ca(2+).

The protein belongs to the synaptotagmin family. As to quaternary structure, homotetramer. Heterodimer; heterodimerizes with SYT2 in presence of calcium. Interacts with SCAMP5. Interacts with STON2. Forms a complex with SV2B, syntaxin 1 and SNAP25. Interacts with SV2A, SV2B and SV2C. Interacts with RIMS1. Interacts with PRRT2. Interacts with DNAJC5 in a phosphorylation-dependent manner. Interacts (via N-terminus) with RAB3A. Interacts with SYT12. Interacts with calmodulin. Interacts with DNM1 (via C-terminal proline-rich domain (PRD)); this interaction facilitates vesicle fission during clathrin-mediated endocytosis (CME). Ca(2+) serves as cofactor. In terms of processing, glycosylated.

It is found in the cytoplasmic vesicle. The protein localises to the secretory vesicle membrane. Its subcellular location is the secretory vesicle. The protein resides in the synaptic vesicle membrane. It localises to the chromaffin granule membrane. It is found in the cytoplasm. Functionally, calcium sensor that participates in triggering neurotransmitter release at the synapse. May have a regulatory role in the membrane interactions during trafficking of synaptic vesicles at the active zone of the synapse. It binds acidic phospholipids with a specificity that requires the presence of both an acidic head group and a diacyl backbone. A Ca(2+)-dependent interaction between synaptotagmin and putative receptors for activated protein kinase C has also been reported. It can bind to at least three additional proteins in a Ca(2+)-independent manner; these are neurexins, syntaxin and AP2. Plays a role in dendrite formation by melanocytes. The protein is Synaptotagmin-1 of Pongo abelii (Sumatran orangutan).